Here is a 539-residue protein sequence, read N- to C-terminus: Protein pim1 (539 aa).

Positions 1–53 are disordered; that stretch reads MTSNRSTRSSTKREEVSKNGVEKRELDESDVMKNGKKPVKRAKVSSLPKPVRV. A compositionally biased stretch (basic and acidic residues) spans 11-33; that stretch reads TKREEVSKNGVEKRELDESDVMK. Residues 34–43 show a composition bias toward basic residues; it reads NGKKPVKRAK. RCC1 repeat units follow at residues 70–125, 127–191, 192–243, 244–296, 298–353, 354–417, and 419–472; these read RLNV…ALSH, GRVY…AITD, NGCC…ALTT, TGKV…AIDN, GRVY…ALLE, DGRV…AVTS, and GKVY…IAGI. The interval 478–539 is disordered; it reads EPVANGIKSE…SVLEPSSTTA (62 aa). Basic and acidic residues predominate over residues 486–504; the sequence is SEPENEKKLKTEETSKTDD. Over residues 514–525 the composition is skewed to polar residues; that stretch reads VTSNGEPSTATS.

Oligomer of dis3, pim1 and spi1. Interacts with ned1.

Its subcellular location is the nucleus. Promotes the exchange of Ran(spi1)-bound GDP by GTP. Involved in the control of mitosis. Regulates a variety of nuclear events, including mitotic check-point, chromosome decondensation and mRNA processing/transport. The polypeptide is Protein pim1 (pim1) (Schizosaccharomyces pombe (strain 972 / ATCC 24843) (Fission yeast)).